The chain runs to 1406 residues: MKDLLDIMQSPTSNGNHEFDSIQITLASPDVIKSWSHGEVKKPETINYRTFKPERDGLFCAKIFGPVKDFECLCGKYKRRKFQGVICEKCGVEVTTAKVRRDRMGHIDLASPVAHIWFLKSLPSRIGLLLDMTLRDIERVLYFESYIVTEPGLTSLEKYQLLDDEDYYKALEEFGDEFTAKMGAEAVQDLLKDIDLDLEIDELREAIPQTGSETKLKKMSKRLKLLEAFRNSNNKPEWMVMNILPVLPPDLRPLVPLEGGRFATSDLNDLYRRVINRNNRLKRLLELSAPDIIVRNEKRMLQESVDALLDNGRRGRAITGSNKRPLKSLADMIKGKQGRFRQNLLGKRVDYSGRSVIVVGPTLRLHQCGLPKKMALELFKPFTYNKLLSHGLATTIKAAKKMVEREEPQVWDMLAMVIREHPVLLNRAPTLHRLGLQAFEPVLIEGKAIQLHPLVCTAFNADFDGDQMAVHVPLTLEAQLESRALMMSTNNILSPANGEPIIVPSQDVVLGLYYISRSSVNAKGEGMIFATVNEALRAIGSNDLHVNAKIKVRVTETHIDDDGNRTKETSIKDTVAGRLLIWNIMPVGMSFDECNEEMTKKNISKLINSCYRKVGVKESVMFADQLMYLGFAQATLSGVSIGIDDMVIPPLKKQIIEVAEAEVREIEDQFEQGFVTAGERYNKVVDIWSRTNDKVAKAMMDNLATDKIINAKGEEEEQKSFNSIFIMSDSGARGSAAQIRQLAGMRGLMAKPDGSIIETPIKANFREGLTVLQYFISTHGARKGLADTALKTANSGYLTRRLVDVAQDLVITSDDCGTEQGLLMKPHIQGGEIIEKLGELVLGRVTARDVTYNDDAEKILIPAGTLIDEHWVKVLDNNAIDDIWARSVITCEIEHGVCSQCYGRDLARGHKVNIGESVGVMAAQSIGEPGTQLTMRTFHVGGAASSASVDNSISVRSAGQAHFENMKTVQHTDGHLVIVSRSAEIALTDELGRERERYKVPYGSSVLIKDEEQVEGGQTIAKWDPHTHPIITEFAGTARFSEITDGLTATVKVDDATGMSSFEILATRDRSSSAKDLRPAIILNTDEGKEVIYFLPAETIIRVSDGEKVAAGSILGRVPQASSGTKDITGGLPRVADLFEARRPKDHAIMAEMSGVVSFGKETKGKNRFIITNEDGEIHEELIPKWRQINVFENETVARGEVIADGPQNPHDILRLKGQTALADYIVNEVQDVYRLQGVKINDKHIEVIIRQMLRKVEITDGGDSNHFKGDQVEYADIKALNAKLEAEDKFPVQFERQLLGITKASLATESFISAASFQETTRVLTAAAVTGKVDELRGLKENVVVGRLIPAGTGLAYHKARKEKAEQKLQDKDLNAAFDMSATTDSKDFASFDEAFAQELNQGNH.

Residues cysteine 72, cysteine 74, cysteine 87, and cysteine 90 each coordinate Zn(2+). The Mg(2+) site is built by aspartate 462, aspartate 464, and aspartate 466. Residues cysteine 816, cysteine 891, cysteine 898, and cysteine 901 each contribute to the Zn(2+) site.

Belongs to the RNA polymerase beta' chain family. The RNAP catalytic core consists of 2 alpha, 1 beta, 1 beta' and 1 omega subunit. When a sigma factor is associated with the core the holoenzyme is formed, which can initiate transcription. Requires Mg(2+) as cofactor. Zn(2+) serves as cofactor.

It catalyses the reaction RNA(n) + a ribonucleoside 5'-triphosphate = RNA(n+1) + diphosphate. Functionally, DNA-dependent RNA polymerase catalyzes the transcription of DNA into RNA using the four ribonucleoside triphosphates as substrates. This chain is DNA-directed RNA polymerase subunit beta', found in Psychrobacter arcticus (strain DSM 17307 / VKM B-2377 / 273-4).